Consider the following 398-residue polypeptide: Enoyl-[acyl-carrier-protein] reductase [NADH] (398 aa).

NAD(+) is bound by residues 48-53 (GASTGY), 74-75 (FE), 111-112 (DA), and 139-140 (LA). Tyrosine 225 lines the substrate pocket. The active-site Proton donor is the tyrosine 235. NAD(+) is bound by residues lysine 244 and 273–275 (VVT).

Belongs to the TER reductase family. In terms of assembly, monomer.

The enzyme catalyses a 2,3-saturated acyl-[ACP] + NAD(+) = a (2E)-enoyl-[ACP] + NADH + H(+). It functions in the pathway lipid metabolism; fatty acid biosynthesis. In terms of biological role, involved in the final reduction of the elongation cycle of fatty acid synthesis (FAS II). Catalyzes the reduction of a carbon-carbon double bond in an enoyl moiety that is covalently linked to an acyl carrier protein (ACP). In Paraburkholderia phytofirmans (strain DSM 17436 / LMG 22146 / PsJN) (Burkholderia phytofirmans), this protein is Enoyl-[acyl-carrier-protein] reductase [NADH].